The primary structure comprises 80 residues: Defensin-like protein 1 (80 aa).

The first 29 residues, 1-29, serve as a signal peptide directing secretion; the sequence is MAKFASIIALLFAALVLFAAFEAPTMVEA. A Pyrrolidone carboxylic acid modification is found at Gln30. 4 disulfide bridges follow: Cys33/Cys80, Cys44/Cys65, Cys50/Cys74, and Cys54/Cys76.

Belongs to the DEFL family. Forms oligomers in its native state.

Its subcellular location is the secreted. Functionally, possesses antifungal activity sensitive to inorganic cations. This chain is Defensin-like protein 1 (AFP1), found in Raphanus sativus (Radish).